The following is a 463-amino-acid chain: ATP synthase subunit beta (463 aa).

152–159 (GGAGVGKT) contributes to the ATP binding site.

It belongs to the ATPase alpha/beta chains family. As to quaternary structure, F-type ATPases have 2 components, CF(1) - the catalytic core - and CF(0) - the membrane proton channel. CF(1) has five subunits: alpha(3), beta(3), gamma(1), delta(1), epsilon(1). CF(0) has three main subunits: a(1), b(2) and c(9-12). The alpha and beta chains form an alternating ring which encloses part of the gamma chain. CF(1) is attached to CF(0) by a central stalk formed by the gamma and epsilon chains, while a peripheral stalk is formed by the delta and b chains.

It localises to the cell membrane. The catalysed reaction is ATP + H2O + 4 H(+)(in) = ADP + phosphate + 5 H(+)(out). Functionally, produces ATP from ADP in the presence of a proton gradient across the membrane. The catalytic sites are hosted primarily by the beta subunits. The chain is ATP synthase subunit beta from Clostridium botulinum (strain Alaska E43 / Type E3).